The chain runs to 339 residues: Methylthioribose-1-phosphate isomerase (339 aa).

Residues 52 to 54 (RGA), Arg-89, and Gln-188 contribute to the substrate site. Asp-229 serves as the catalytic Proton donor. Residue 239-240 (NK) participates in substrate binding.

This sequence belongs to the eIF-2B alpha/beta/delta subunits family. MtnA subfamily.

The enzyme catalyses 5-(methylsulfanyl)-alpha-D-ribose 1-phosphate = 5-(methylsulfanyl)-D-ribulose 1-phosphate. It participates in amino-acid biosynthesis; L-methionine biosynthesis via salvage pathway; L-methionine from S-methyl-5-thio-alpha-D-ribose 1-phosphate: step 1/6. Its function is as follows. Catalyzes the interconversion of methylthioribose-1-phosphate (MTR-1-P) into methylthioribulose-1-phosphate (MTRu-1-P). The sequence is that of Methylthioribose-1-phosphate isomerase from Anaeromyxobacter sp. (strain K).